A 70-amino-acid chain; its full sequence is Large ribosomal subunit protein bL31c (70 aa).

It belongs to the bacterial ribosomal protein bL31 family. Type A subfamily. As to quaternary structure, part of the 50S ribosomal subunit.

The protein resides in the plastid. It localises to the chloroplast. Binds the 23S rRNA. The polypeptide is Large ribosomal subunit protein bL31c (Emiliania huxleyi (Coccolithophore)).